Reading from the N-terminus, the 165-residue chain is DELTA-actitoxin-Oor1a (165 aa).

Residues 1-17 (ATFRVLAKVLAELGKVS) are N-terminal region. Serine 41, valine 74, serine 92, proline 94, and tyrosine 125 together coordinate phosphocholine. Residues 92-107 (SVPYDYNLYSNWWNVK) form a trp-rich region, which is important for the binding to lipid membrane region.

Belongs to the actinoporin family. Sea anemone subfamily. In terms of assembly, octamer or nonamer in membranes. Monomer in the soluble state.

The protein localises to the secreted. It is found in the nematocyst. Its subcellular location is the target cell membrane. In terms of biological role, pore-forming protein that forms cations-selective hydrophilic pores of around 1 nm and causes cardiac stimulation and cytolysis. Pore formation is a multi-step process that involves specific recognition of membrane sphingomyelin (but neither cholesterol nor phosphatidylcholine) using aromatic rich region and adjacent phosphocholine (POC) binding site, firm binding to the membrane (mainly driven by hydrophobic interactions) accompanied by the transfer of the N-terminal region to the lipid-water interface and finally pore formation after oligomerization of monomers. Cytolytic effects include red blood cells hemolysis, platelet aggregation and lysis, cytotoxic and cytostatic effects on fibroblasts. Lethality in mammals has been ascribed to severe vasospasm of coronary vessels, cardiac arrhythmia, and inotropic effects. The protein is DELTA-actitoxin-Oor1a of Oulactis orientalis (Japan anemone).